The chain runs to 158 residues: UPF0262 protein Rsph17029_2283 (158 aa).

This sequence belongs to the UPF0262 family.

This is UPF0262 protein Rsph17029_2283 from Cereibacter sphaeroides (strain ATCC 17029 / ATH 2.4.9) (Rhodobacter sphaeroides).